Here is a 97-residue protein sequence, read N- to C-terminus: Co-chaperonin GroES (97 aa).

This sequence belongs to the GroES chaperonin family. In terms of assembly, heptamer of 7 subunits arranged in a ring. Interacts with the chaperonin GroEL.

Its subcellular location is the cytoplasm. In terms of biological role, together with the chaperonin GroEL, plays an essential role in assisting protein folding. The GroEL-GroES system forms a nano-cage that allows encapsulation of the non-native substrate proteins and provides a physical environment optimized to promote and accelerate protein folding. GroES binds to the apical surface of the GroEL ring, thereby capping the opening of the GroEL channel. In Oleispira antarctica, this protein is Co-chaperonin GroES.